The following is a 183-amino-acid chain: Ribosome-recycling factor (183 aa).

It belongs to the RRF family.

It is found in the cytoplasm. Its function is as follows. Responsible for the release of ribosomes from messenger RNA at the termination of protein biosynthesis. May increase the efficiency of translation by recycling ribosomes from one round of translation to another. This Buchnera aphidicola subsp. Baizongia pistaciae (strain Bp) protein is Ribosome-recycling factor.